A 431-amino-acid chain; its full sequence is Histidine--tRNA ligase (431 aa).

Belongs to the class-II aminoacyl-tRNA synthetase family. As to quaternary structure, homodimer.

Its subcellular location is the cytoplasm. It carries out the reaction tRNA(His) + L-histidine + ATP = L-histidyl-tRNA(His) + AMP + diphosphate + H(+). This is Histidine--tRNA ligase from Levilactobacillus brevis (strain ATCC 367 / BCRC 12310 / CIP 105137 / JCM 1170 / LMG 11437 / NCIMB 947 / NCTC 947) (Lactobacillus brevis).